The primary structure comprises 595 residues: Elongation factor 4 (595 aa).

In terms of domain architecture, tr-type G spans 2 to 183; it reads KNIRNFCIIA…AIVEQVPAPA (182 aa). Residues 14 to 19 and 130 to 133 contribute to the GTP site; these read DHGKST and NKVD.

This sequence belongs to the TRAFAC class translation factor GTPase superfamily. Classic translation factor GTPase family. LepA subfamily.

It is found in the cell inner membrane. It catalyses the reaction GTP + H2O = GDP + phosphate + H(+). Its function is as follows. Required for accurate and efficient protein synthesis under certain stress conditions. May act as a fidelity factor of the translation reaction, by catalyzing a one-codon backward translocation of tRNAs on improperly translocated ribosomes. Back-translocation proceeds from a post-translocation (POST) complex to a pre-translocation (PRE) complex, thus giving elongation factor G a second chance to translocate the tRNAs correctly. Binds to ribosomes in a GTP-dependent manner. The protein is Elongation factor 4 of Porphyromonas gingivalis (strain ATCC BAA-308 / W83).